The primary structure comprises 653 residues: Fusexin 1 (653 aa).

The signal sequence occupies residues methionine 1 to alanine 23. The Extracellular segment spans residues alanine 24–glycine 559. 4 cysteine pairs are disulfide-bonded: cysteine 126/cysteine 166, cysteine 397/cysteine 440, cysteine 467/cysteine 490, and cysteine 502/cysteine 519. A fusion loop region spans residues aspartate 154–glutamine 159. The chain crosses the membrane as a helical span at residues alanine 560–valine 580. Topologically, residues glycine 581–aspartate 600 are cytoplasmic. The next 2 membrane-spanning stretches (helical) occupy residues alanine 601–glutamine 621 and leucine 622–leucine 642. At tyrosine 643–leucine 653 the chain is on the cytoplasmic side.

It belongs to the HAP2/GCS1 family. Fusexin 1 subfamily. Homotrimer stabilized by interdomain contacts and numerous Ca(2+) and Na(+) ions.

Its subcellular location is the cell surface. It is found in the cell membrane. Exhibits fusogenic activity. Mediates cell-cell fusion in mammalian cells (bilateral fusion). The polypeptide is Fusexin 1 (Haloferax sp. (strain Q22)).